The following is a 395-amino-acid chain: uncharacterized protein (395 aa).

12 helical membrane-spanning segments follow: residues 12–34, 44–66, 75–94, 99–121, 134–156, 160–182, 208–230, 245–264, 271–293, 298–320, 341–360, and 364–381; these read LLASSLLLTIGRGATLPFMTIYL, LIGYAMTIALTIGVVFSLGFGIL, YMLLAITAFASGFIAITLVN, VVLFFALINCAYSVFATVLKAWF, FSINYTMLNIGWTIGPPLGTLLV, INLPFWLAAICSAFPMLFIQIWV, LLWFTCSGFLASFVSGAFASCIS, VVAVVLPVNAAMVVTLQYSV, ANIRALMTAGTLCFVIGLVGFIF, LLLWGMSAAVFTVGEIIYAPGEY, LGWLGAAINPLVSGVVLTSL, and SLFVILALVIIAAWVLML.

It belongs to the major facilitator superfamily.

The protein localises to the cell inner membrane. Its function is as follows. A transporter able to export peptides. When overexpressed, allows cells deleted for multiple peptidases (pepA, pepB, pepD and pepN) to grow in the presence of dipeptides Ala-Gln or Gly-Tyr which otherwise inhibit growth. Cells overexpressing this protein have decreased intracellular levels of Ala-Gln dipeptide, and in a system that produces the Ala-Gln dipeptide overproduction of this protein increases export of the dipeptide. This is an uncharacterized protein from Escherichia coli (strain K12).